A 329-amino-acid chain; its full sequence is Palmitoyltransferase pfa3 (329 aa).

A run of 5 helical transmembrane segments spans residues 14 to 34, 49 to 69, 141 to 161, 177 to 197, and 243 to 263; these read VLVILAKYCMQIIALSLMSGV, VGIIILFLYIMIVTCYVLTNL, FFFLECFYLNLYSICVLYSTF, AIYLVFWGFLFAFAVGMSIVM, and IMGKSPFLWLLPFPNSIGEGV. Positions 97 to 147 constitute a DHHC domain; that stretch reads RFCEKCQEYKCDRSHHCSQCNKCILRMDHHCMWFKNCVGFRNHKFFFLECF.

Belongs to the DHHC palmitoyltransferase family. PFA3 subfamily. In terms of processing, autopalmitoylated.

It localises to the vacuole membrane. The protein localises to the golgi apparatus membrane. It carries out the reaction L-cysteinyl-[protein] + hexadecanoyl-CoA = S-hexadecanoyl-L-cysteinyl-[protein] + CoA. Its function is as follows. Palmitoyltransferase specific for VAC8. Palmitoylates VAC8 at one or more of its N-terminal cysteine residues, which is required for its proper membrane localization. The protein is Palmitoyltransferase pfa3 (pfa3) of Schizosaccharomyces pombe (strain 972 / ATCC 24843) (Fission yeast).